Here is a 192-residue protein sequence, read N- to C-terminus: Thymidine kinase (192 aa).

Residues 9–16 (SSMNAGKS) and 87–90 (DEAQ) contribute to the ATP site. Glu-88 functions as the Proton acceptor in the catalytic mechanism. Positions 145, 147, 182, and 185 each coordinate Zn(2+).

Belongs to the thymidine kinase family. As to quaternary structure, homotetramer.

The protein localises to the cytoplasm. The catalysed reaction is thymidine + ATP = dTMP + ADP + H(+). In Colwellia psychrerythraea (strain 34H / ATCC BAA-681) (Vibrio psychroerythus), this protein is Thymidine kinase.